A 525-amino-acid polypeptide reads, in one-letter code: GMP synthase [glutamine-hydrolyzing] (525 aa).

The region spanning 8-207 (KILILDFGSQ…ALDICGCAAN (200 aa)) is the Glutamine amidotransferase type-1 domain. The active-site Nucleophile is Cys85. Catalysis depends on residues His181 and Glu183. The GMPS ATP-PPase domain occupies 208–400 (WKPSSIIEDA…LGLPYNMLYR (193 aa)). 235-241 (SGGVDSS) contacts ATP.

Homodimer.

It carries out the reaction XMP + L-glutamine + ATP + H2O = GMP + L-glutamate + AMP + diphosphate + 2 H(+). The protein operates within purine metabolism; GMP biosynthesis; GMP from XMP (L-Gln route): step 1/1. Catalyzes the synthesis of GMP from XMP. This chain is GMP synthase [glutamine-hydrolyzing], found in Shewanella putrefaciens (strain CN-32 / ATCC BAA-453).